A 689-amino-acid chain; its full sequence is Glycine--tRNA ligase beta subunit (689 aa).

This sequence belongs to the class-II aminoacyl-tRNA synthetase family. Tetramer of two alpha and two beta subunits.

It is found in the cytoplasm. It carries out the reaction tRNA(Gly) + glycine + ATP = glycyl-tRNA(Gly) + AMP + diphosphate. This chain is Glycine--tRNA ligase beta subunit, found in Glaesserella parasuis serovar 5 (strain SH0165) (Haemophilus parasuis).